The primary structure comprises 275 residues: Polyamine aminopropyltransferase (275 aa).

A PABS domain is found at 2–235 (DLWLREGQIE…GFWSFTIGSK (234 aa)). Gln-31 serves as a coordination point for S-methyl-5'-thioadenosine. Residues His-62 and Asp-86 each contribute to the spermidine site. Residues Glu-106 and 137 to 138 (DG) each bind S-methyl-5'-thioadenosine. Residue Asp-155 is the Proton acceptor of the active site. Residue 155-158 (DSTD) participates in spermidine binding.

Belongs to the spermidine/spermine synthase family. As to quaternary structure, homodimer or homotetramer.

The protein localises to the cytoplasm. It carries out the reaction S-adenosyl 3-(methylsulfanyl)propylamine + putrescine = S-methyl-5'-thioadenosine + spermidine + H(+). It functions in the pathway amine and polyamine biosynthesis; spermidine biosynthesis; spermidine from putrescine: step 1/1. In terms of biological role, catalyzes the irreversible transfer of a propylamine group from the amino donor S-adenosylmethioninamine (decarboxy-AdoMet) to putrescine (1,4-diaminobutane) to yield spermidine. This Clostridium kluyveri (strain NBRC 12016) protein is Polyamine aminopropyltransferase.